The primary structure comprises 200 residues: 3-isopropylmalate dehydratase small subunit (200 aa).

Belongs to the LeuD family. LeuD type 1 subfamily. As to quaternary structure, heterodimer of LeuC and LeuD.

It catalyses the reaction (2R,3S)-3-isopropylmalate = (2S)-2-isopropylmalate. It participates in amino-acid biosynthesis; L-leucine biosynthesis; L-leucine from 3-methyl-2-oxobutanoate: step 2/4. Catalyzes the isomerization between 2-isopropylmalate and 3-isopropylmalate, via the formation of 2-isopropylmaleate. The sequence is that of 3-isopropylmalate dehydratase small subunit from Aliivibrio fischeri (strain MJ11) (Vibrio fischeri).